The sequence spans 207 residues: Superoxide dismutase [Mn] (207 aa).

Mn(2+) contacts are provided by His-28, His-76, Asp-160, and His-164.

This sequence belongs to the iron/manganese superoxide dismutase family. As to quaternary structure, homotetramer. It depends on Mn(2+) as a cofactor.

Its subcellular location is the secreted. It catalyses the reaction 2 superoxide + 2 H(+) = H2O2 + O2. In terms of biological role, destroys superoxide anion radicals which are normally produced within the cells and which are toxic to biological systems. This is Superoxide dismutase [Mn] (sodA) from Mycolicibacterium smegmatis (Mycobacterium smegmatis).